The primary structure comprises 120 residues: Glycine cleavage system H protein (120 aa).

The 83-residue stretch at 19–101 folds into the Lipoyl-binding domain; sequence DGTVGITDHA…YEGGWLFKLE (83 aa). Lysine 60 is modified (N6-lipoyllysine).

Belongs to the GcvH family. As to quaternary structure, the glycine cleavage system is composed of four proteins: P, T, L and H. Requires (R)-lipoate as cofactor.

Functionally, the glycine cleavage system catalyzes the degradation of glycine. The H protein shuttles the methylamine group of glycine from the P protein to the T protein. This Deinococcus deserti (strain DSM 17065 / CIP 109153 / LMG 22923 / VCD115) protein is Glycine cleavage system H protein.